A 285-amino-acid polypeptide reads, in one-letter code: Acetyl-coenzyme A carboxylase carboxyl transferase subunit beta (285 aa).

Residues 29–285 form the CoA carboxyltransferase N-terminal domain; sequence IMTKCPKCKK…ILKIHQEVSN (257 aa). Zn(2+) is bound by residues Cys-33, Cys-36, Cys-52, and Cys-55. The C4-type zinc-finger motif lies at 33–55; it reads CPKCKKIMYTKELNENLNVCFNC.

Belongs to the AccD/PCCB family. Acetyl-CoA carboxylase is a heterohexamer composed of biotin carboxyl carrier protein (AccB), biotin carboxylase (AccC) and two subunits each of ACCase subunit alpha (AccA) and ACCase subunit beta (AccD). Zn(2+) serves as cofactor.

Its subcellular location is the cytoplasm. The enzyme catalyses N(6)-carboxybiotinyl-L-lysyl-[protein] + acetyl-CoA = N(6)-biotinyl-L-lysyl-[protein] + malonyl-CoA. It participates in lipid metabolism; malonyl-CoA biosynthesis; malonyl-CoA from acetyl-CoA: step 1/1. Component of the acetyl coenzyme A carboxylase (ACC) complex. Biotin carboxylase (BC) catalyzes the carboxylation of biotin on its carrier protein (BCCP) and then the CO(2) group is transferred by the transcarboxylase to acetyl-CoA to form malonyl-CoA. This Staphylococcus epidermidis (strain ATCC 12228 / FDA PCI 1200) protein is Acetyl-coenzyme A carboxylase carboxyl transferase subunit beta.